A 104-amino-acid polypeptide reads, in one-letter code: L-rhamnose mutarotase (104 aa).

Tyrosine 18 is a substrate binding site. Residue histidine 22 is the Proton donor of the active site. Residues tyrosine 41 and 76 to 77 (WW) contribute to the substrate site.

This sequence belongs to the rhamnose mutarotase family. As to quaternary structure, homodimer.

It localises to the cytoplasm. It carries out the reaction alpha-L-rhamnose = beta-L-rhamnose. It participates in carbohydrate metabolism; L-rhamnose metabolism. In terms of biological role, involved in the anomeric conversion of L-rhamnose. The chain is L-rhamnose mutarotase from Escherichia fergusonii (strain ATCC 35469 / DSM 13698 / CCUG 18766 / IAM 14443 / JCM 21226 / LMG 7866 / NBRC 102419 / NCTC 12128 / CDC 0568-73).